The primary structure comprises 78 residues: Defensin beta 136 (78 aa).

The signal sequence occupies residues Met1–Gly21. 3 disulfides stabilise this stretch: Cys33–Cys60, Cys40–Cys54, and Cys44–Cys61.

This sequence belongs to the beta-defensin family.

It localises to the secreted. In terms of biological role, host defense peptide that exhibits antibacterial and antifungal activity. Exhibits antimicrobial activity against E.coli, S.aureus and C.albicans (in vitro). Has high lipopolysaccharide (LPS)-binding affinity, and may thereby be involved in immunoregulation through LPS neutralization. This is Defensin beta 136 (DEFB136) from Homo sapiens (Human).